Reading from the N-terminus, the 311-residue chain is Ribosomal protein L11 methyltransferase (311 aa).

Residues T162, G183, D205, and N248 each coordinate S-adenosyl-L-methionine.

The protein belongs to the methyltransferase superfamily. PrmA family.

It is found in the cytoplasm. It carries out the reaction L-lysyl-[protein] + 3 S-adenosyl-L-methionine = N(6),N(6),N(6)-trimethyl-L-lysyl-[protein] + 3 S-adenosyl-L-homocysteine + 3 H(+). Functionally, methylates ribosomal protein L11. This Bacillus subtilis (strain 168) protein is Ribosomal protein L11 methyltransferase.